The sequence spans 1328 residues: Mitogen-activated protein kinase kinase kinase 19 (1328 aa).

Basic and acidic residues predominate over residues 1–19 (MSSMPKPERHAESLLDICH). 4 disordered regions span residues 1 to 28 (MSSMPKPERHAESLLDICHDTNSSPTDL), 44 to 74 (RSEEFDQDGDCSHSTLVNEEEDPSGGRQDWQ), 344 to 380 (VREEDIDCHGSKTRKPEEENSQYLSSRKNESSVAKNY), and 524 to 561 (QENDKHKMNSHRSKLDSKTKTSKKTPQNFVISTEGPIK). Positions 344–361 (VREEDIDCHGSKTRKPEE) are enriched in basic and acidic residues. The span at 364 to 377 (SQYLSSRKNESSVA) shows a compositional bias: polar residues. A compositionally biased stretch (basic and acidic residues) spans 524 to 542 (QENDKHKMNSHRSKLDSKT). In terms of domain architecture, Protein kinase spans 1061-1324 (WTKGEILGKG…ALQLLKHSFL (264 aa)). Residues 1067–1075 (LGKGAYGTV) and K1089 each bind ATP. D1186 serves as the catalytic Proton acceptor.

Belongs to the protein kinase superfamily. STE Ser/Thr protein kinase family. STE20 subfamily.

It carries out the reaction L-seryl-[protein] + ATP = O-phospho-L-seryl-[protein] + ADP + H(+). It catalyses the reaction L-threonyl-[protein] + ATP = O-phospho-L-threonyl-[protein] + ADP + H(+). The chain is Mitogen-activated protein kinase kinase kinase 19 (MAP3K19) from Homo sapiens (Human).